A 481-amino-acid polypeptide reads, in one-letter code: Membrane-bound lytic murein transglycosylase F (481 aa).

A signal peptide spans 1 to 21 (MKPLKLNYFFIGIITLLLALA). The segment at 22–268 (LWPSIPWRSS…RLEEKYLGHV (247 aa)) is non-LT domain. The LT domain stretch occupies residues 269–481 (GEFDYVDTTT…PAVPLTKVPE (213 aa)). Glu313 is an active-site residue.

In the N-terminal section; belongs to the bacterial solute-binding protein 3 family. The protein in the C-terminal section; belongs to the transglycosylase Slt family.

The protein localises to the cell outer membrane. The enzyme catalyses Exolytic cleavage of the (1-&gt;4)-beta-glycosidic linkage between N-acetylmuramic acid (MurNAc) and N-acetylglucosamine (GlcNAc) residues in peptidoglycan, from either the reducing or the non-reducing ends of the peptidoglycan chains, with concomitant formation of a 1,6-anhydrobond in the MurNAc residue.. Murein-degrading enzyme that degrades murein glycan strands and insoluble, high-molecular weight murein sacculi, with the concomitant formation of a 1,6-anhydromuramoyl product. Lytic transglycosylases (LTs) play an integral role in the metabolism of the peptidoglycan (PG) sacculus. Their lytic action creates space within the PG sacculus to allow for its expansion as well as for the insertion of various structures such as secretion systems and flagella. The polypeptide is Membrane-bound lytic murein transglycosylase F (Pectobacterium atrosepticum (strain SCRI 1043 / ATCC BAA-672) (Erwinia carotovora subsp. atroseptica)).